A 341-amino-acid chain; its full sequence is Eukaryotic translation initiation factor 2 subunit 1 (341 aa).

An S1 motif domain is found at 18-89 (NELVMVRIES…DKGYIDLSKR (72 aa)). Residues 301 to 341 (LMEQLEVENQDGDGEEHEDDDDDDDDEEEEEKPKEKKSSRK) form a disordered region. Positions 303 to 330 (EQLEVENQDGDGEEHEDDDDDDDDEEEE) are enriched in acidic residues. A compositionally biased stretch (basic and acidic residues) spans 331 to 341 (EKPKEKKSSRK).

It belongs to the eIF-2-alpha family. As to quaternary structure, eukaryotic translation initiation factor 2 eIF2 is a heterotrimeric complex composed of an alpha, a beta and a gamma subunit.

The protein localises to the cytoplasm. It localises to the cytosol. EIF-2 functions in the early steps of protein synthesis by forming a ternary complex with GTP and initiator tRNA. This complex binds to a 40S ribosomal subunit, followed by mRNA binding to form a 43S pre-initiation complex. Junction of the 60S ribosomal subunit to form the 80S initiation complex is preceded by hydrolysis of the GTP bound to eIF-2 and release of an eIF-2-GDP binary complex. In order for eIF-2 to recycle and catalyze another round of initiation, the GDP bound to eIF-2 must exchange with GTP by way of a reaction catalyzed by eIF2B. The chain is Eukaryotic translation initiation factor 2 subunit 1 (eif2s1) from Dictyostelium discoideum (Social amoeba).